A 516-amino-acid chain; its full sequence is Bifunctional pantoate ligase/cytidylate kinase (516 aa).

Positions 1 to 279 (MVRKIFQTNA…CGSTRLIDHT (279 aa)) are pantoate--beta-alanine ligase. 29–36 (MGGLHPGH) lines the ATP pocket. Histidine 36 (proton donor) is an active-site residue. Position 64 (glutamine 64) interacts with (R)-pantoate. Beta-alanine is bound at residue glutamine 64. ATP is bound at residue 153–156 (GEKD). Glutamine 159 is a binding site for (R)-pantoate. 190 to 193 (YSSR) lines the ATP pocket. The segment at 280-516 (FLMHRKPIIA…PEEVWPTPNS (237 aa)) is cytidylate kinase.

In the N-terminal section; belongs to the pantothenate synthetase family. This sequence in the C-terminal section; belongs to the cytidylate kinase family. Type 1 subfamily.

Its subcellular location is the cytoplasm. It catalyses the reaction (R)-pantoate + beta-alanine + ATP = (R)-pantothenate + AMP + diphosphate + H(+). It carries out the reaction CMP + ATP = CDP + ADP. The enzyme catalyses dCMP + ATP = dCDP + ADP. It participates in cofactor biosynthesis; (R)-pantothenate biosynthesis; (R)-pantothenate from (R)-pantoate and beta-alanine: step 1/1. Functionally, catalyzes the condensation of pantoate with beta-alanine in an ATP-dependent reaction via a pantoyl-adenylate intermediate. Its function is as follows. Catalyzes the transfer of a phosphate group from ATP to either CMP or dCMP to form CDP or dCDP and ADP, respectively. The polypeptide is Bifunctional pantoate ligase/cytidylate kinase (Prochlorococcus marinus (strain NATL2A)).